Reading from the N-terminus, the 100-residue chain is NADH-quinone oxidoreductase subunit K (100 aa).

Transmembrane regions (helical) follow at residues 2-22 (IGLS…LMGV), 29-49 (LMLF…FAAI), and 63-83 (FFII…LIVL).

The protein belongs to the complex I subunit 4L family. In terms of assembly, NDH-1 is composed of 14 different subunits. Subunits NuoA, H, J, K, L, M, N constitute the membrane sector of the complex.

It is found in the cell inner membrane. It carries out the reaction a quinone + NADH + 5 H(+)(in) = a quinol + NAD(+) + 4 H(+)(out). In terms of biological role, NDH-1 shuttles electrons from NADH, via FMN and iron-sulfur (Fe-S) centers, to quinones in the respiratory chain. The immediate electron acceptor for the enzyme in this species is believed to be ubiquinone. Couples the redox reaction to proton translocation (for every two electrons transferred, four hydrogen ions are translocated across the cytoplasmic membrane), and thus conserves the redox energy in a proton gradient. The protein is NADH-quinone oxidoreductase subunit K of Sulfurovum sp. (strain NBC37-1).